The sequence spans 574 residues: Craniofacial development protein 2 (574 aa).

Composition is skewed to basic and acidic residues over residues 1–16, 23–37, 45–55, 86–111, and 134–172; these read MEEVDSKDISSSKAED, ECHEEAVDELMKEDE, EQTKGIKRKAE, SEKEDAATEQEKGVESEDARKKKEDE, and TGEETEETRSGEEQEKPKEMQEVKLTKSLVEEVRCDRQQ. Disordered regions lie at residues 1–222 and 488–574; these read MEEV…PAVD and TRPF…SGVF. Over residues 199 to 208 the composition is skewed to polar residues; sequence KTGTNASSKN. Positions 493 to 572 are hydrophilic; that stretch reads GTNEADDTSE…AVPSLPAGSG (80 aa). The segment covering 502-516 has biased composition (basic and acidic residues); it reads EESKPSSEQKGKEKP. Residues 518–528 are compositionally biased toward low complexity; it reads ASVPSAVSSVP.

It localises to the cytoplasm. The protein localises to the nucleus. This Tragulus javanicus (Lesser Malay chevrotain) protein is Craniofacial development protein 2 (CFDP2).